The following is a 337-amino-acid chain: Putative transcription activator protein HfaB (337 aa).

The span at 303 to 313 shows a compositional bias: polar residues; it reads AYNNLGTNNAQ. The interval 303 to 337 is disordered; the sequence is AYNNLGTNNAQTRDDPSRWNARRDPDIRDAKRGRY. Residues 314–337 are compositionally biased toward basic and acidic residues; it reads TRDDPSRWNARRDPDIRDAKRGRY.

In terms of biological role, required for the attachment of the holdfast to the cell. May be involved in the positive regulation of hfaC. The protein is Putative transcription activator protein HfaB (hfaB) of Caulobacter vibrioides (strain ATCC 19089 / CIP 103742 / CB 15) (Caulobacter crescentus).